Consider the following 497-residue polypeptide: Putative endothelial lipase (497 aa).

The N-terminal stretch at 1 to 23 (MRACPFLLLLLLPLLLSLGRIAA) is a signal peptide. The cysteines at positions 73 and 86 are disulfide-linked. Asn89 and Asn145 each carry an N-linked (GlcNAc...) asparagine glycan. The active-site Nucleophile is the Ser178. Asp202 functions as the Charge relay system in the catalytic mechanism. Residues Cys262 and Cys282 are joined by a disulfide bond. His284 functions as the Charge relay system in the catalytic mechanism. 2 cysteine pairs are disulfide-bonded: Cys307/Cys326 and Cys318/Cys321. 335-347 (KMRNKRNSKMYLK) contributes to the heparin binding site. Positions 357-492 (FHYQLKIHVF…CLKMVKVEKH (136 aa)) constitute a PLAT domain. N-linked (GlcNAc...) asparagine glycosylation is present at Asn403.

It belongs to the AB hydrolase superfamily. Lipase family. In terms of assembly, head to tail homodimer. In terms of tissue distribution, expressed by the venom gland.

It is found in the secreted. It carries out the reaction a triacylglycerol + H2O = a diacylglycerol + a fatty acid + H(+). With respect to regulation, inhibited by serum. In terms of biological role, has phospholipase and triglyceride lipase activities. The polypeptide is Putative endothelial lipase (Crotalus adamanteus (Eastern diamondback rattlesnake)).